A 281-amino-acid chain; its full sequence is Shikimate dehydrogenase (NADP(+)) (281 aa).

Shikimate contacts are provided by residues 15–17 and threonine 62; that span reads SKS. Residue lysine 66 is the Proton acceptor of the active site. Residues asparagine 87 and aspartate 102 each contribute to the shikimate site. Residues 127–131, 151–156, and leucine 217 each bind NADP(+); these read GAGGS and NRTPER. Residue tyrosine 219 participates in shikimate binding. Residue glycine 241 participates in NADP(+) binding.

Belongs to the shikimate dehydrogenase family. In terms of assembly, homodimer.

It catalyses the reaction shikimate + NADP(+) = 3-dehydroshikimate + NADPH + H(+). It functions in the pathway metabolic intermediate biosynthesis; chorismate biosynthesis; chorismate from D-erythrose 4-phosphate and phosphoenolpyruvate: step 4/7. Its function is as follows. Involved in the biosynthesis of the chorismate, which leads to the biosynthesis of aromatic amino acids. Catalyzes the reversible NADPH linked reduction of 3-dehydroshikimate (DHSA) to yield shikimate (SA). The protein is Shikimate dehydrogenase (NADP(+)) of Stenotrophomonas maltophilia (strain R551-3).